The sequence spans 558 residues: Acylase ACY 1 proenzyme (558 aa).

Thr368 (nucleophile) is an active-site residue.

This sequence belongs to the gamma-glutamyltransferase family. As to quaternary structure, dimer of two non-identical chains processed from the same precursor.

It catalyses the reaction (7R)-7-(4-carboxybutanamido)cephalosporanate + H2O = (7R)-7-aminocephalosporanate + glutarate. The enzyme catalyses an N-terminal (5-L-glutamyl)-[peptide] + an alpha-amino acid = 5-L-glutamyl amino acid + an N-terminal L-alpha-aminoacyl-[peptide]. It carries out the reaction glutathione + H2O = L-cysteinylglycine + L-glutamate. The catalysed reaction is an S-substituted glutathione + H2O = an S-substituted L-cysteinylglycine + L-glutamate. Its function is as follows. Besides the cephalosporin acylase I activity which converts GL-7ACA into 7-ACA; this enzyme displays some gamma glutamyltranspeptidase activity. This is Acylase ACY 1 proenzyme (acyI) from Pseudomonas sp. (strain V22).